A 304-amino-acid polypeptide reads, in one-letter code: uncharacterized protein (304 aa).

This is an uncharacterized protein from Ureaplasma parvum serovar 3 (strain ATCC 700970).